The chain runs to 427 residues: Enolase (427 aa).

Gln-163 is a (2R)-2-phosphoglycerate binding site. Glu-205 acts as the Proton donor in catalysis. 3 residues coordinate Mg(2+): Asp-242, Glu-288, and Asp-315. Lys-340, Arg-369, Ser-370, and Lys-391 together coordinate (2R)-2-phosphoglycerate. Lys-340 functions as the Proton acceptor in the catalytic mechanism.

The protein belongs to the enolase family. The cofactor is Mg(2+).

Its subcellular location is the cytoplasm. The protein resides in the secreted. The protein localises to the cell surface. It catalyses the reaction (2R)-2-phosphoglycerate = phosphoenolpyruvate + H2O. It functions in the pathway carbohydrate degradation; glycolysis; pyruvate from D-glyceraldehyde 3-phosphate: step 4/5. Functionally, catalyzes the reversible conversion of 2-phosphoglycerate (2-PG) into phosphoenolpyruvate (PEP). It is essential for the degradation of carbohydrates via glycolysis. The polypeptide is Enolase (Cytophaga hutchinsonii (strain ATCC 33406 / DSM 1761 / CIP 103989 / NBRC 15051 / NCIMB 9469 / D465)).